The following is a 101-amino-acid chain: Small ribosomal subunit protein bS18c (101 aa).

It belongs to the bacterial ribosomal protein bS18 family. Part of the 30S ribosomal subunit.

It is found in the plastid. Its subcellular location is the chloroplast. The chain is Small ribosomal subunit protein bS18c from Eucalyptus globulus subsp. globulus (Tasmanian blue gum).